The chain runs to 426 residues: Bone morphogenetic protein 7 (426 aa).

Residues Met1–Ser22 form the signal peptide. Residues Ser23–Arg282 constitute a propeptide that is removed on maturation. N-linked (GlcNAc...) asparagine glycosylation is found at Asn177, Asn307, and Asn367. 3 disulfides stabilise this stretch: Cys325/Cys391, Cys354/Cys423, and Cys358/Cys425.

Belongs to the TGF-beta family. In terms of assembly, homodimer; disulfide-linked. Interacts with twsg1.

It localises to the secreted. In terms of biological role, growth factor of the TGF-beta superfamily that plays important role in various biological processes, including embryogenesis, hematopoiesis, neurogenesis and skeletal morphogenesis. Initiates the canonical BMP signaling cascade by associating with type I receptor ACVR1 and type II receptor ACVR2A. Once all three components are bound together in a complex at the cell surface, ACVR2A phosphorylates and activates ACVR1. In turn, ACVR1 propagates signal by phosphorylating SMAD1/5/8 that travel to the nucleus and act as activators and repressors of transcription of target genes. In Xenopus laevis (African clawed frog), this protein is Bone morphogenetic protein 7 (bmp7).